Here is a 330-residue protein sequence, read N- to C-terminus: Small ribosomal subunit protein uS2 (330 aa).

It belongs to the universal ribosomal protein uS2 family.

In Rhodopseudomonas palustris (strain BisA53), this protein is Small ribosomal subunit protein uS2.